We begin with the raw amino-acid sequence, 473 residues long: Mitochondrial distribution and morphology protein 10 (473 aa).

It belongs to the MDM10 family. In terms of assembly, component of the ER-mitochondria encounter structure (ERMES) or MDM complex, composed of MMM1, MDM10, MDM12 and MDM34. Associates with the mitochondrial outer membrane sorting assembly machinery SAM(core) complex.

The protein localises to the mitochondrion outer membrane. Functionally, component of the ERMES/MDM complex, which serves as a molecular tether to connect the endoplasmic reticulum and mitochondria. Components of this complex are involved in the control of mitochondrial shape and protein biogenesis and may function in phospholipid exchange. MDM10 is involved in the late assembly steps of the general translocase of the mitochondrial outer membrane (TOM complex). Functions in the TOM40-specific route of the assembly of outer membrane beta-barrel proteins, including the association of TOM40 with the receptor TOM22 and small TOM proteins. Can associate with the SAM(core) complex as well as the MDM12-MMM1 complex, both involved in late steps of the major beta-barrel assembly pathway, that is responsible for biogenesis of all outer membrane beta-barrel proteins. May act as a switch that shuttles between both complexes and channels precursor proteins into the TOM40-specific pathway. Plays a role in mitochondrial morphology and in the inheritance of mitochondria. This is Mitochondrial distribution and morphology protein 10 from Candida albicans (strain SC5314 / ATCC MYA-2876) (Yeast).